A 205-amino-acid chain; its full sequence is Type III pantothenate kinase (205 aa).

5-12 contacts ATP; that stretch reads DIGNTTYH. Residues tyrosine 68 and 72 to 75 contribute to the substrate site; that span reads GIDR. Aspartate 74 (proton acceptor) is an active-site residue. Residue aspartate 89 participates in K(+) binding. Serine 92 is a binding site for ATP. Position 144 (serine 144) interacts with substrate.

The protein belongs to the type III pantothenate kinase family. Homodimer. NH4(+) serves as cofactor. It depends on K(+) as a cofactor.

It is found in the cytoplasm. The enzyme catalyses (R)-pantothenate + ATP = (R)-4'-phosphopantothenate + ADP + H(+). It participates in cofactor biosynthesis; coenzyme A biosynthesis; CoA from (R)-pantothenate: step 1/5. Catalyzes the phosphorylation of pantothenate (Pan), the first step in CoA biosynthesis. The protein is Type III pantothenate kinase of Sulfurimonas denitrificans (strain ATCC 33889 / DSM 1251) (Thiomicrospira denitrificans (strain ATCC 33889 / DSM 1251)).